The following is a 446-amino-acid chain: Phosphoglucosamine mutase (446 aa).

The active-site Phosphoserine intermediate is the S99. Residues S99, D242, D244, and D246 each coordinate Mg(2+). Position 99 is a phosphoserine (S99).

Belongs to the phosphohexose mutase family. Requires Mg(2+) as cofactor. In terms of processing, activated by phosphorylation.

It catalyses the reaction alpha-D-glucosamine 1-phosphate = D-glucosamine 6-phosphate. Its function is as follows. Catalyzes the conversion of glucosamine-6-phosphate to glucosamine-1-phosphate. The polypeptide is Phosphoglucosamine mutase (Campylobacter curvus (strain 525.92)).